We begin with the raw amino-acid sequence, 483 residues long: Aspartyl/glutamyl-tRNA(Asn/Gln) amidotransferase subunit B (483 aa).

It belongs to the GatB/GatE family. GatB subfamily. In terms of assembly, heterotrimer of A, B and C subunits.

The catalysed reaction is L-glutamyl-tRNA(Gln) + L-glutamine + ATP + H2O = L-glutaminyl-tRNA(Gln) + L-glutamate + ADP + phosphate + H(+). It catalyses the reaction L-aspartyl-tRNA(Asn) + L-glutamine + ATP + H2O = L-asparaginyl-tRNA(Asn) + L-glutamate + ADP + phosphate + 2 H(+). In terms of biological role, allows the formation of correctly charged Asn-tRNA(Asn) or Gln-tRNA(Gln) through the transamidation of misacylated Asp-tRNA(Asn) or Glu-tRNA(Gln) in organisms which lack either or both of asparaginyl-tRNA or glutaminyl-tRNA synthetases. The reaction takes place in the presence of glutamine and ATP through an activated phospho-Asp-tRNA(Asn) or phospho-Glu-tRNA(Gln). The sequence is that of Aspartyl/glutamyl-tRNA(Asn/Gln) amidotransferase subunit B from Rickettsia typhi (strain ATCC VR-144 / Wilmington).